The sequence spans 435 residues: MTKKSRFDQFGFQPFIGLAIDKLGFYEPTEVQQKLIPGILKGESIIGQSQTGTGKTHTFILPIINNVNPEKDAVQAVITAPSRELATQIYNEIRKVTKYSEKEIAVQLVIGGTDKQRAIDKLKKQPQIIVGTPGRINDLIREQALFVHTAKTLVIDEADMTLDMGFLNDVDHIAGKMPANLQMLVFSATIPQKLKPFLSKYMENPRYEHIQPKVAASKTVEHRIMATRSRNKLDLLKNVLVGSQPYLAIVFTNTKTTADEVANGLIERGLKVAKIHGDVNPRERKRTMKQIENLDYQYVVATDLAARGIDIQGISHVVNYELPDDLDFYIHRTGRTGRAGHSGIALTLFEPADEDRLNQLEKMGIEFKHVDWKNKEFVTLEDRNRRAKREAKRETADPREIGMRKKAKQKGKPNYKKKINYKMNEIKRRERRKKR.

The Q motif signature appears at 5–33 (SRFDQFGFQPFIGLAIDKLGFYEPTEVQQ). Residues 36 to 208 (IPGILKGESI…SKYMENPRYE (173 aa)) enclose the Helicase ATP-binding domain. Position 49-56 (49-56 (SQTGTGKT)) interacts with ATP. The short motif at 156-159 (DEAD) is the DEAD box element. One can recognise a Helicase C-terminal domain in the interval 235–378 (LLKNVLVGSQ…HVDWKNKEFV (144 aa)). Residues 383–435 (RNRRAKREAKRETADPREIGMRKKAKQKGKPNYKKKINYKMNEIKRRERRKKR) are disordered. Over residues 391 to 403 (AKRETADPREIGM) the composition is skewed to basic and acidic residues. A compositionally biased stretch (basic residues) spans 404–420 (RKKAKQKGKPNYKKKIN).

This sequence belongs to the DEAD box helicase family. CshB subfamily.

The protein resides in the cytoplasm. The enzyme catalyses ATP + H2O = ADP + phosphate + H(+). Its function is as follows. DEAD-box RNA helicase involved in cold tolerance, motility, and tolerance to heat, alkali and oxidative stress. This chain is DEAD-box ATP-dependent RNA helicase CshB, found in Listeria monocytogenes serovar 1/2a (strain ATCC BAA-679 / EGD-e).